We begin with the raw amino-acid sequence, 299 residues long: Ribonuclease Z (299 aa).

The Zn(2+) site is built by histidine 60, histidine 62, aspartate 64, histidine 65, histidine 137, aspartate 207, and histidine 265. Residue aspartate 64 is the Proton acceptor of the active site.

The protein belongs to the RNase Z family. As to quaternary structure, homodimer. Zn(2+) serves as cofactor.

The catalysed reaction is Endonucleolytic cleavage of RNA, removing extra 3' nucleotides from tRNA precursor, generating 3' termini of tRNAs. A 3'-hydroxy group is left at the tRNA terminus and a 5'-phosphoryl group is left at the trailer molecule.. Zinc phosphodiesterase, which displays some tRNA 3'-processing endonuclease activity. Probably involved in tRNA maturation, by removing a 3'-trailer from precursor tRNA. The protein is Ribonuclease Z of Nitrosopumilus maritimus (strain SCM1).